We begin with the raw amino-acid sequence, 2483 residues long: Cation-independent mannose-6-phosphate receptor (2483 aa).

Positions 1 to 35 (MRAVQLGPVPSGPRVALLPPLLLLLLLAAAGSAQA) are cleaved as a signal peptide. Topologically, residues 36–2295 (QAVDLDALCS…YKGLSERSQA (2260 aa)) are lumenal. MRH domains lie at 42–158 (ALCS…ACKK), 167–315 (VPCY…ACHR), 321–463 (ESCS…ACIK), 468–613 (LLCG…ACVL), 619–755 (ENCT…ACPE), 758–917 (LECM…ACPI), 925–1072 (QACS…ACTP), 1075–1212 (VDCQ…ACPV), and 1218–1356 (DNCQ…ACPP). Intrachain disulfides connect cysteine 44–cysteine 64 and cysteine 72–cysteine 79. Asparagine 107 carries N-linked (GlcNAc...) asparagine glycosylation. 8 disulfides stabilise this stretch: cysteine 112–cysteine 144, cysteine 129–cysteine 156, cysteine 169–cysteine 207, cysteine 223–cysteine 230, cysteine 270–cysteine 301, cysteine 283–cysteine 313, cysteine 323–cysteine 361, and cysteine 369–cysteine 377. Asparagine 395 and asparagine 430 each carry an N-linked (GlcNAc...) asparagine glycan. Cystine bridges form between cysteine 415–cysteine 449, cysteine 429–cysteine 461, cysteine 470–cysteine 513, and cysteine 525–cysteine 532. N-linked (GlcNAc...) asparagine glycosylation is found at asparagine 537 and asparagine 575. Intrachain disulfides connect cysteine 566-cysteine 599 and cysteine 580-cysteine 611. Asparagine 620 carries an N-linked (GlcNAc...) asparagine glycan. 5 cysteine pairs are disulfide-bonded: cysteine 621–cysteine 658, cysteine 666–cysteine 673, cysteine 724–cysteine 753, cysteine 760–cysteine 807, and cysteine 816–cysteine 823. The N-linked (GlcNAc...) asparagine glycan is linked to asparagine 740. The N-linked (GlcNAc...) asparagine glycan is linked to asparagine 864. 7 cysteine pairs are disulfide-bonded: cysteine 868-cysteine 903, cysteine 886-cysteine 915, cysteine 927-cysteine 964, cysteine 970-cysteine 981, cysteine 1035-cysteine 1070, cysteine 1077-cysteine 1118, and cysteine 1127-cysteine 1135. An N-linked (GlcNAc...) asparagine glycan is attached at asparagine 944. N-linked (GlcNAc...) asparagine glycosylation occurs at asparagine 1157. 4 disulfide bridges follow: cysteine 1170-cysteine 1198, cysteine 1183-cysteine 1210, cysteine 1220-cysteine 1255, and cysteine 1263-cysteine 1275. A glycan (N-linked (GlcNAc...) asparagine) is linked at asparagine 1239. Asparagine 1305 is a glycosylation site (N-linked (GlcNAc...) asparagine). 2 disulfide bridges follow: cysteine 1312–cysteine 1342 and cysteine 1326–cysteine 1354. Asparagine 1358 is a glycosylation site (N-linked (GlcNAc...) asparagine). MRH domains are found at residues 1360–1501 (TECS…ACPV), 1507–1641 (DDCQ…ACEQ), 1643–1790 (TECT…VCPD), 1795–1982 (QGCA…VCPP), 1985–2120 (MECK…ACAV), and 2128–2273 (VNGT…VCPL). Intrachain disulfides connect cysteine 1362–cysteine 1401 and cysteine 1413–cysteine 1420. An N-linked (GlcNAc...) asparagine glycan is attached at asparagine 1423. 20 disulfide bridges follow: cysteine 1454/cysteine 1487, cysteine 1469/cysteine 1499, cysteine 1509/cysteine 1546, cysteine 1552/cysteine 1559, cysteine 1591/cysteine 1627, cysteine 1607/cysteine 1639, cysteine 1645/cysteine 1688, cysteine 1699/cysteine 1706, cysteine 1743/cysteine 1776, cysteine 1759/cysteine 1788, cysteine 1797/cysteine 1832, cysteine 1843/cysteine 1849, cysteine 1886/cysteine 1968, cysteine 1896/cysteine 1920, cysteine 1910/cysteine 1935, cysteine 1950/cysteine 1980, cysteine 1987/cysteine 2022, cysteine 2032/cysteine 2039, cysteine 2075/cysteine 2106, and cysteine 2089/cysteine 2118. A glycan (N-linked (GlcNAc...) asparagine) is linked at asparagine 1532. Asparagine 1649 is a glycosylation site (N-linked (GlcNAc...) asparagine). Asparagine 1750 carries an N-linked (GlcNAc...) asparagine glycan. A glycan (N-linked (GlcNAc...) asparagine) is linked at asparagine 1809. The Fibronectin type-II domain maps to 1891-1937 (DDGEPCVFPFIYKGKSYDECVLEGRAKLWCSKTANYDRDHEWGFCRQ). Asparagine 2078 carries an N-linked (GlcNAc...) asparagine glycan. N-linked (GlcNAc...) asparagine glycosylation occurs at asparagine 2129. 3 disulfides stabilise this stretch: cysteine 2181–cysteine 2187, cysteine 2225–cysteine 2259, and cysteine 2241–cysteine 2271. A helical membrane pass occupies residues 2296–2316 (VGAVLSLLLVALTGCLLALLL). Topologically, residues 2317 to 2483 (HKKERRETVI…DDSDEDLLHI (167 aa)) are cytoplasmic. The residue at position 2342 (lysine 2342) is an N6-acetyllysine. Serine 2401 carries the phosphoserine modification. Positions 2415–2483 (SGRGAEVESS…DDSDEDLLHI (69 aa)) are disordered. Residue arginine 2417 is modified to Omega-N-methylarginine. 2 stretches are compositionally biased toward basic and acidic residues: residues 2434 to 2451 (VLKEREGERLGLVRGEKA) and 2471 to 2483 (SFHDDSDEDLLHI). A phosphoserine mark is found at serine 2471 and serine 2476.

It belongs to the MRL1/IGF2R family. In terms of assembly, binds HA-I and HA-II plasma membrane adapters. Interacts with DPP4; the interaction is direct. Binds GGA1, GGA2 and GGA3. Interacts with the heterotrimeric retromer cargo-selective complex (CSC), formed by VPS26 (VPS26A or VPS26B), VPS29 and VPS35; which is involved in retrograde trafficking of the receptor from endosomes to the Golgi apparatus. In terms of processing, palmitoylated. Undergoes cysteine S-palmitoylation which promotes interaction with the retromer cargo-selective complex which mediates its retrograde trafficking to the Golgi apparatus.

It localises to the golgi apparatus membrane. Its subcellular location is the endosome membrane. Its function is as follows. Mediates the transport of phosphorylated lysosomal enzymes from the Golgi complex and the cell surface to lysosomes. Lysosomal enzymes bearing phosphomannosyl residues bind specifically to mannose-6-phosphate receptors in the Golgi apparatus and the resulting receptor-ligand complex is transported to an acidic prelysosomal compartment where the low pH mediates the dissociation of the complex. The receptor is then recycled back to the Golgi for another round of trafficking through its binding to the retromer. This receptor also binds IGF2. Acts as a positive regulator of T-cell coactivation by binding DPP4. In Mus musculus (Mouse), this protein is Cation-independent mannose-6-phosphate receptor (Igf2r).